We begin with the raw amino-acid sequence, 327 residues long: Putative pumilio homolog 19 (327 aa).

Positions 1–324 (MAVSDNTFSM…NIANILDTFR (324 aa)) constitute a PUM-HD domain. Pumilio repeat units follow at residues 79–114 (SDSD…FCAA), 115–149 (ILRR…ALYE), 150–185 (RILY…DQLL), 186–222 (ELVV…NIAV), 223–260 (NLYG…ELLG), and 261–295 (CDGD…DLFW).

Its subcellular location is the cytoplasm. Sequence-specific RNA-binding protein that regulates translation and mRNA stability by binding the 3'-UTR of target mRNAs. This chain is Putative pumilio homolog 19 (APUM19), found in Arabidopsis thaliana (Mouse-ear cress).